Consider the following 931-residue polypeptide: Synaptopodin (931 aa).

Disordered regions lie at residues 56–78 (EEEG…APAI) and 113–243 (ASVS…MEGY). At Ser-134 the chain carries Phosphoserine. Over residues 136 to 148 (TEKDLKEAKERSQ) the composition is skewed to basic and acidic residues. Composition is skewed to polar residues over residues 153–164 (QLTTPPSSNSRG) and 188–200 (PKLS…TGHP). Ser-202, Ser-222, and Ser-258 each carry phosphoserine. Low complexity predominate over residues 214-232 (PTSPSKPGSPKHSSSQSPS). The segment at 280–420 (GLHLSQNRET…SSSGPPAADL (141 aa)) is disordered. Polar residues-rich tracts occupy residues 282–293 (HLSQNRETQQSS) and 309–370 (INQN…NTPS). The segment covering 373-384 (DGQRPVPAEEVR) has biased composition (basic and acidic residues). Residues Ser-490 and Ser-514 each carry the phosphoserine modification. Disordered stretches follow at residues 542-591 (RRPL…KGQV) and 691-711 (SPRI…EASG). The residue at position 549 (Thr-549) is a Phosphothreonine. The PPxY motif signature appears at 551–554 (PPTY). The segment covering 556–568 (ETLSTAPVASQVR) has biased composition (polar residues). Position 569 is a phosphoserine (Ser-569). The span at 569 to 580 (SPPSYSTLYPSS) shows a compositional bias: low complexity. The short motif at 570 to 573 (PPSY) is the PPxY motif element. Phosphoserine is present on residues Ser-691, Ser-742, Ser-746, and Ser-767. At Thr-771 the chain carries Phosphothreonine. The disordered stretch occupies residues 775 to 918 (SLYHGYLPEN…RPSFSTRNAG (144 aa)). Residues 816–841 (SSRATSSRASSRTVSPRAASPAKPSS) are compositionally biased toward low complexity. Residue Ser-835 is modified to Phosphoserine. The residue at position 850 (Arg-850) is an Omega-N-methylarginine. Ser-856 is modified (phosphoserine). Positions 874 to 895 (VQDSLQPTAVSPTYSSDISPVS) are enriched in polar residues.

The protein belongs to the synaptopodin family. Interacts with BAIAP1. Interacts with actin. Interacts (via PPxY motifs) with WWC1 (via WW domains). Post-translationally, O-glycosylated. Expressed at high levels in brain and at moderate, but still significant levels in the heart, skeletal muscle, lung and kidney. In brain, expressed in the cerebral cortex, hippocampus, olfactory bulb and striatum.

The protein localises to the cytoplasm. It localises to the cytoskeleton. The protein resides in the cell junction. Its subcellular location is the tight junction. It is found in the perikaryon. The protein localises to the cell projection. It localises to the dendritic spine. The protein resides in the postsynaptic density. Its subcellular location is the synapse. It is found in the cytosol. Actin-associated protein that may play a role in modulating actin-based shape and motility of dendritic spines and renal podocyte foot processes. Seems to be essential for the formation of spine apparatuses in spines of telencephalic neurons, which is involved in synaptic plasticity. The polypeptide is Synaptopodin (Synpo) (Rattus norvegicus (Rat)).